A 190-amino-acid chain; its full sequence is Elongation factor P (190 aa).

An N6-(3,6-diaminohexanoyl)-5-hydroxylysine modification is found at K34.

The protein belongs to the elongation factor P family. Post-translationally, may be beta-lysylated on the epsilon-amino group of Lys-34 by the combined action of EpmA and EpmB, and then hydroxylated on the C5 position of the same residue by EpmC (if this protein is present). Lysylation is critical for the stimulatory effect of EF-P on peptide-bond formation. The lysylation moiety may extend toward the peptidyltransferase center and stabilize the terminal 3-CCA end of the tRNA. Hydroxylation of the C5 position on Lys-34 may allow additional potential stabilizing hydrogen-bond interactions with the P-tRNA.

Its subcellular location is the cytoplasm. It participates in protein biosynthesis; polypeptide chain elongation. Involved in peptide bond synthesis. Alleviates ribosome stalling that occurs when 3 or more consecutive Pro residues or the sequence PPG is present in a protein, possibly by augmenting the peptidyl transferase activity of the ribosome. Modification of Lys-34 is required for alleviation. This Psychrobacter cryohalolentis (strain ATCC BAA-1226 / DSM 17306 / VKM B-2378 / K5) protein is Elongation factor P.